Here is a 492-residue protein sequence, read N- to C-terminus: 2-succinylbenzoate--CoA ligase (492 aa).

Belongs to the ATP-dependent AMP-binding enzyme family. MenE subfamily.

The catalysed reaction is 2-succinylbenzoate + ATP + CoA = 2-succinylbenzoyl-CoA + AMP + diphosphate. The protein operates within quinol/quinone metabolism; 1,4-dihydroxy-2-naphthoate biosynthesis; 1,4-dihydroxy-2-naphthoate from chorismate: step 5/7. It functions in the pathway quinol/quinone metabolism; menaquinone biosynthesis. In terms of biological role, converts 2-succinylbenzoate (OSB) to 2-succinylbenzoyl-CoA (OSB-CoA). The chain is 2-succinylbenzoate--CoA ligase from Geobacillus sp. (strain WCH70).